The sequence spans 462 residues: Iroquois-class homeodomain protein irx-1-B (462 aa).

Positions 121-183 (DPGRPKNATR…NARRRLKKEN (63 aa)) form a DNA-binding region, homeobox; TALE-type. Disordered regions lie at residues 191–302 (GKED…PHSK), 314–339 (SPDGALKSSPPPSQANHTSPQMQHPA), and 405–462 (SLSS…LPSA). Composition is skewed to acidic residues over residues 210 to 220 (EDDEEIDLESI) and 228 to 239 (NDGEQSNEEEDE). Residues 240–257 (KLDHFRHGEKVSLKKESE) are compositionally biased toward basic and acidic residues. Basic and acidic residues predominate over residues 410-426 (RTPERTSPKHSDRENLP). The segment covering 446–455 (FSQQEGTSRI) has biased composition (polar residues).

This sequence belongs to the TALE/IRO homeobox family.

It is found in the nucleus. Functionally, acts partially redundantly with other irx members in neural patterning. Required for formation of the posterior forebrain, midbrain, hindbrain, and to a lesser extent, spinal cord. Acts early in neural plate development to induce expression of some but not all proneural genes, and specify a neural precursor state. Also up-regulates repressors that prevent neuronal differentiation. Patterns the neuroectoderm in both the anterior/posterior and dorsal/ventral axes. Acts primarily as a transcriptional repressor during neural development, and binds to the bmp4 promoter to repress gene expression and thus mediate down-regulation of bmp4 by wnt signaling. Controls multiple processes through bmp4-repression including neural plate development, neural crest specification and Spemann organizer development. Involved in the specification of the preplacodal field at the anterior border of the neural plate. Regulates the genetic cascade of interactions that are necessary for positioning the isthmus organizer and the formation of the midbrain-hindbrain boundary. Required during at least two stages of pronephros kidney development; during neurula stages, maintains transcription of key renal genes to define the size and identity of the pronephric anlage, probably in part through regulation of bmp-signaling. Subsequently required for proper formation of the intermediate tubule segment of the pronephros. Acts principally as a transcriptional activator during pronephros development. This is Iroquois-class homeodomain protein irx-1-B (irx1-b) from Xenopus laevis (African clawed frog).